An 820-amino-acid polypeptide reads, in one-letter code: MVKLYCAVVGVAGSAFSVRVDESDTVDDLKDAIKAKKPNDFKDIDADKLELYVAKRDGVWLTEADVKSGVADITGLVRLEVVRAKLFSVGLSDEVVSEVDAQEEAAGRGPVNVLVVVPMKKRRVDAGVDEERRFFDTRDFPPLLAPPQRGATVESPEAQWEKLLNSLEWKEPKRLCASSGQNWPYQGESELAGHLVEPLALHYTAWYLQNEDKQNHAINLVLSGPGTGKSRMLDQMKGLMCAAAARSNNRKLKERMENAFVFSVTFENGTSATGSLLDRDNPEFDISYRMLYQLSKDRPNWKKFAKTLKSYRSLELDIEAAIGILAKLKGIDDVKKMTVILCVDGLQKLVNDGTKSCDFYRVLASVCSFLNSSRAFAVCVCSATIQSPVDKALSDSPQKRVFLVPPPLRGHEVLPTKTRIEKQLVDDMGGHGRALETLQLFLSHYTKDQLEEMDPTWMFEKVCDALRLQYGDIFASPFFQDPYNCREVLAAILSRRRYKLFDRIGRTDMTVDCLRSFGLFRWGAEGHLECAFILLVLLMQKLPKKLGEVDNFDDHLTRTVLVWQRFEQFVAFYRRVKSIAYCETPVALSSFHAGARFGAIQDIIITEPTSRTVVEALRQEDTKSSSDDSTCFTNRDGGVKISDMDTIVINGASASAGDLFMRVQLKVGRQNVQCNEVIQCKLLQTKQKIHEDAYAKERAKAANESSDVFLLVTPAQATEFDLPPRCGLVSANEFGRYFGPFTSRAYRSFLEPPNINTASFHELRRLEGVGDATAAKIIAERTIRRFSNLEDALNRLVPSKKGKTAMILSRMHYDDDEADL.

A signal peptide spans 1 to 17; that stretch reads MVKLYCAVVGVAGSAFS. The tract at residues 18 to 55 is LQLFLAK domain; that stretch reads VRVDESDTVDDLKDAIKAKKPNDFKDIDADKLELYVAK. Residues 58-111 form a DWL domain region; that stretch reads GVWLTEADVKSGVADITGLVRLEVVRAKLFSVGLSDEVVSEVDAQEEAAGRGPV. The short motif at 112 to 117 is the HVLVXXP motif element; it reads NVLVVV. The short motif at 118–124 is the Host nuclear localization signal element; the sequence is PMKKRRV. The segment at 125–820 is C-terminal DC effector domain; the sequence is DAGVDEERRF…MHYDDDEADL (696 aa). Asn-268, Asn-371, and Asn-703 each carry an N-linked (GlcNAc...) asparagine glycan. Residues 754–791 form a hhH DNA-binding domain region; it reads NINTASFHELRRLEGVGDATAAKIIAERTIRRFSNLED.

The protein belongs to the Crinkler effector family.

It is found in the secreted. The protein resides in the host nucleus. Its function is as follows. Secreted effector that suppresses plant basal defense and promotes plant susceptibility via targeting promoters of host HSP gene and thus inhibiting their expression. CRN108 binds directly to heat shock elements (HSEs) 5'-GAAnnTTC-3' and interferes with the association of the HSE with the plant heat shock transcription factors, which initializes HSP gene expression in response to stress. The chain is Crinkler effector protein 108 from Phytophthora sojae (Soybean stem and root rot agent).